A 501-amino-acid chain; its full sequence is Glucose-6-phosphate exchanger SLC37A2 (501 aa).

A helical membrane pass occupies residues serine 19–serine 39. N-linked (GlcNAc...) asparagine glycans are attached at residues asparagine 53, asparagine 62, and asparagine 68. 5 helical membrane-spanning segments follow: residues glycine 88–phenylalanine 108, leucine 118–tryptophan 138, tyrosine 145–valine 165, serine 189–leucine 209, and serine 210–isoleucine 230. The tract at residues proline 240–cysteine 262 is disordered. A run of 6 helical transmembrane segments spans residues leucine 302–isoleucine 322, glycine 334–valine 354, alanine 362–isoleucine 382, isoleucine 391–alanine 411, alanine 434–isoleucine 454, and valine 462–tyrosine 482.

The protein belongs to the major facilitator superfamily. Organophosphate:Pi antiporter (OPA) (TC 2.A.1.4) family. As to expression, detected in intestine and pancreas. Lower expression is also detected in liver and kidney.

The protein resides in the endoplasmic reticulum membrane. It carries out the reaction D-glucose 6-phosphate(in) + phosphate(out) = D-glucose 6-phosphate(out) + phosphate(in). Its activity is regulated as follows. Inhibited by vanadate but not by chlorogenic acid. In terms of biological role, inorganic phosphate and glucose-6-phosphate antiporter. May transport cytoplasmic glucose-6-phosphate into the lumen of the endoplasmic reticulum and translocate inorganic phosphate into the opposite direction. Independent of a lumenal glucose-6-phosphatase. May not play a role in homeostatic regulation of blood glucose levels. This chain is Glucose-6-phosphate exchanger SLC37A2, found in Homo sapiens (Human).